The following is a 239-amino-acid chain: Lectin (239 aa).

N-linked (GlcNAc...) asparagine glycosylation is found at Asn-17 and Asn-113.

Belongs to the leguminous lectin family. As to quaternary structure, homodimer.

Galactose and N-acetyllactosamine specific lectin. The protein is Lectin of Erythrina crista-galli (Cockspur coral tree).